The following is a 156-amino-acid chain: Small ribosomal subunit protein uS7 (156 aa).

It belongs to the universal ribosomal protein uS7 family. In terms of assembly, part of the 30S ribosomal subunit. Contacts proteins S9 and S11.

Its function is as follows. One of the primary rRNA binding proteins, it binds directly to 16S rRNA where it nucleates assembly of the head domain of the 30S subunit. Is located at the subunit interface close to the decoding center, probably blocks exit of the E-site tRNA. This Bacillus cereus (strain B4264) protein is Small ribosomal subunit protein uS7.